Consider the following 439-residue polypeptide: Aspartate--tRNA(Asp/Asn) ligase (439 aa).

Glutamate 177 serves as a coordination point for L-aspartate. The segment at 199–202 is aspartate; the sequence is QLYK. Position 221 (arginine 221) interacts with L-aspartate. Residues 221–223, 229–231, and glutamate 362 each bind ATP; these read RAE and RHL. 2 residues coordinate Mg(2+): glutamate 362 and serine 365. L-aspartate-binding residues include serine 365 and arginine 369. An ATP-binding site is contributed by 410–413; the sequence is GADR.

The protein belongs to the class-II aminoacyl-tRNA synthetase family. Type 2 subfamily. In terms of assembly, homodimer. The cofactor is Mg(2+).

It is found in the cytoplasm. The catalysed reaction is tRNA(Asx) + L-aspartate + ATP = L-aspartyl-tRNA(Asx) + AMP + diphosphate. Aspartyl-tRNA synthetase with relaxed tRNA specificity since it is able to aspartylate not only its cognate tRNA(Asp) but also tRNA(Asn). Reaction proceeds in two steps: L-aspartate is first activated by ATP to form Asp-AMP and then transferred to the acceptor end of tRNA(Asp/Asn). In Methanosphaera stadtmanae (strain ATCC 43021 / DSM 3091 / JCM 11832 / MCB-3), this protein is Aspartate--tRNA(Asp/Asn) ligase.